A 78-amino-acid polypeptide reads, in one-letter code: Acyl carrier protein (78 aa).

In terms of domain architecture, Carrier spans 1-76; the sequence is MALFEDIQAV…DVVKYIEDNK (76 aa). Position 36 is an O-(pantetheine 4'-phosphoryl)serine (serine 36).

The protein belongs to the acyl carrier protein (ACP) family. 4'-phosphopantetheine is transferred from CoA to a specific serine of apo-ACP by AcpS. This modification is essential for activity because fatty acids are bound in thioester linkage to the sulfhydryl of the prosthetic group.

The protein localises to the cytoplasm. It functions in the pathway lipid metabolism; fatty acid biosynthesis. In terms of biological role, carrier of the growing fatty acid chain in fatty acid biosynthesis. The sequence is that of Acyl carrier protein from Helicobacter pylori (strain G27).